Here is a 161-residue protein sequence, read N- to C-terminus: Cyclin-dependent protein kinase inhibitor SMR12 (161 aa).

A compositionally biased stretch (acidic residues) spans 84-93 (EEEEVVEEEN). A disordered region spans residues 84–106 (EEEEVVEEENDGFKTPTRPENRI).

Its function is as follows. Probable cyclin-dependent protein kinase (CDK) inhibitor that functions as a repressor of mitosis in the endoreduplication cell cycle. This chain is Cyclin-dependent protein kinase inhibitor SMR12, found in Arabidopsis thaliana (Mouse-ear cress).